The chain runs to 156 residues: MDITFTIFAQSLAFAALIWIVATKIWPPLIKVIEERQQKIAEGLAAADLGQKELAQAQEEIKKTLKNAHKKANEIIEQAHARAHQIIEAAKAEAIAETNRQQNLAQVEIEAAAKRAREELRKHVSILAVNGAEKLLKREIDVNTHKMLLDELAAEI.

A helical membrane pass occupies residues 3–23 (ITFTIFAQSLAFAALIWIVAT).

It belongs to the ATPase B chain family. In terms of assembly, F-type ATPases have 2 components, F(1) - the catalytic core - and F(0) - the membrane proton channel. F(1) has five subunits: alpha(3), beta(3), gamma(1), delta(1), epsilon(1). F(0) has three main subunits: a(1), b(2) and c(10-14). The alpha and beta chains form an alternating ring which encloses part of the gamma chain. F(1) is attached to F(0) by a central stalk formed by the gamma and epsilon chains, while a peripheral stalk is formed by the delta and b chains.

The protein localises to the cell inner membrane. Functionally, f(1)F(0) ATP synthase produces ATP from ADP in the presence of a proton or sodium gradient. F-type ATPases consist of two structural domains, F(1) containing the extramembraneous catalytic core and F(0) containing the membrane proton channel, linked together by a central stalk and a peripheral stalk. During catalysis, ATP synthesis in the catalytic domain of F(1) is coupled via a rotary mechanism of the central stalk subunits to proton translocation. Its function is as follows. Component of the F(0) channel, it forms part of the peripheral stalk, linking F(1) to F(0). This is ATP synthase subunit b from Xylella fastidiosa (strain M23).